A 77-amino-acid polypeptide reads, in one-letter code: Acyl carrier protein (77 aa).

One can recognise a Carrier domain in the interval methionine 1–glutamate 76. Position 36 is an O-(pantetheine 4'-phosphoryl)serine (serine 36).

Belongs to the acyl carrier protein (ACP) family. Post-translationally, 4'-phosphopantetheine is transferred from CoA to a specific serine of apo-ACP by AcpS. This modification is essential for activity because fatty acids are bound in thioester linkage to the sulfhydryl of the prosthetic group.

The protein localises to the cytoplasm. Its pathway is lipid metabolism; fatty acid biosynthesis. Its function is as follows. Carrier of the growing fatty acid chain in fatty acid biosynthesis. This is Acyl carrier protein from Staphylococcus aureus (strain Mu3 / ATCC 700698).